The sequence spans 505 residues: Ribose import ATP-binding protein RbsA 1 (505 aa).

ABC transporter domains are found at residues Leu-13–Asp-249 and Tyr-254–Ala-503. Gly-45–Ser-52 contributes to the ATP binding site.

It belongs to the ABC transporter superfamily. Ribose importer (TC 3.A.1.2.1) family. As to quaternary structure, the complex is composed of an ATP-binding protein (RbsA), two transmembrane proteins (RbsC) and a solute-binding protein (RbsB).

The protein localises to the cell membrane. The catalysed reaction is D-ribose(out) + ATP + H2O = D-ribose(in) + ADP + phosphate + H(+). In terms of biological role, part of the ABC transporter complex RbsABC involved in ribose import. Responsible for energy coupling to the transport system. This Streptomyces coelicolor (strain ATCC BAA-471 / A3(2) / M145) protein is Ribose import ATP-binding protein RbsA 1.